The chain runs to 303 residues: Protoheme IX farnesyltransferase 1 (303 aa).

9 helical membrane-spanning segments follow: residues P18–G38, L42–V62, A91–T111, L114–M134, V139–A159, V169–F189, L213–G233, T235–L255, and F274–A294.

Belongs to the UbiA prenyltransferase family. Protoheme IX farnesyltransferase subfamily.

It localises to the cell inner membrane. It catalyses the reaction heme b + (2E,6E)-farnesyl diphosphate + H2O = Fe(II)-heme o + diphosphate. It functions in the pathway porphyrin-containing compound metabolism; heme O biosynthesis; heme O from protoheme: step 1/1. Converts heme B (protoheme IX) to heme O by substitution of the vinyl group on carbon 2 of heme B porphyrin ring with a hydroxyethyl farnesyl side group. This Shewanella frigidimarina (strain NCIMB 400) protein is Protoheme IX farnesyltransferase 1.